A 185-amino-acid chain; its full sequence is Regulator of rDNA transcription protein 13 (185 aa).

WD repeat units follow at residues 9 to 48, 71 to 108, and 111 to 148; these read GHTD…NNGE, GHRA…LKHF, and HTQL…LVRS.

May be involved in the modulation of rDNA transcription. The sequence is that of Regulator of rDNA transcription protein 13 (RRT13) from Saccharomyces cerevisiae (strain ATCC 204508 / S288c) (Baker's yeast).